The primary structure comprises 531 residues: Tryptophan biosynthesis protein TRP1 (531 aa).

The interval 1-254 (MGNILEEIAA…TVKDLLQNVT (254 aa)) is indole-3-glycerol phosphate synthase. An N-(5'-phosphoribosyl)anthranilate isomerase region spans residues 255 to 531 (RHSESGEFAL…TLKIDEETEN (277 aa)).

In the N-terminal section; belongs to the TrpC family. The protein in the C-terminal section; belongs to the TrpF family.

It catalyses the reaction N-(5-phospho-beta-D-ribosyl)anthranilate = 1-(2-carboxyphenylamino)-1-deoxy-D-ribulose 5-phosphate. The enzyme catalyses 1-(2-carboxyphenylamino)-1-deoxy-D-ribulose 5-phosphate + H(+) = (1S,2R)-1-C-(indol-3-yl)glycerol 3-phosphate + CO2 + H2O. It participates in amino-acid biosynthesis; L-tryptophan biosynthesis; L-tryptophan from chorismate: step 3/5. It functions in the pathway amino-acid biosynthesis; L-tryptophan biosynthesis; L-tryptophan from chorismate: step 4/5. Bifunctional enzyme that catalyzes two sequential steps of tryptophan biosynthetic pathway. The protein is Tryptophan biosynthesis protein TRP1 (TRP1) of Phytophthora nicotianae (Potato buckeye rot agent).